The sequence spans 319 residues: Olfactory receptor 8K1 (319 aa).

The Extracellular segment spans residues 1 to 31; sequence MNHVVKHNHTAVTKVTEFILMGITDNPGLQA. A glycan (N-linked (GlcNAc...) asparagine) is linked at Asn8. Residues 32–52 form a helical membrane-spanning segment; it reads PLFGLFLIIYLVTVIGNLGMV. Topologically, residues 53-60 are cytoplasmic; that stretch reads ILTYLDSK. Residues 61-81 form a helical membrane-spanning segment; the sequence is LHTPMYFFLRHLSITDLGYST. Over 82–105 the chain is Extracellular; it reads VIAPKMLVNFIVHKNTISYNWYAT. The chain crosses the membrane as a helical span at residues 106-126; that stretch reads QLAFFEIFIISELFILSAMAY. The Cytoplasmic segment spans residues 127-145; it reads DRYVAICKPLLYVIIMAEK. The chain crosses the membrane as a helical span at residues 146–166; that stretch reads VLWVLVIVPYLYSTFVSLFLT. Over 167-203 the chain is Extracellular; that stretch reads IKLFKLSFCGSNIISYFYCDCIPLMSILCSDTNELEL. The chain crosses the membrane as a helical span at residues 204–223; sequence IILIFSGCNLLFSLSIVLIS. At 224-243 the chain is on the cytoplasmic side; it reads YMFILVAILRMNSRKGRYKA. A helical transmembrane segment spans residues 244 to 264; that stretch reads FSTCSSHLTVVIMFYGTLLFI. At 265–277 the chain is on the extracellular side; sequence YLQPKSSHTLAID. Residues 278 to 298 traverse the membrane as a helical segment; sequence KMASVFYTLLIPMLNPLIYSL. The Cytoplasmic segment spans residues 299–319; sequence RNKEVKDALKRTLTNRFKIPI.

Belongs to the G-protein coupled receptor 1 family.

It is found in the cell membrane. Functionally, odorant receptor. In Homo sapiens (Human), this protein is Olfactory receptor 8K1 (OR8K1).